Here is a 267-residue protein sequence, read N- to C-terminus: Outer membrane protein assembly factor BamD (267 aa).

An N-terminal signal peptide occupies residues 1–16; it reads MKKILLTVSLGLALSA. Cysteine 17 carries N-palmitoyl cysteine lipidation. Cysteine 17 is lipidated: S-diacylglycerol cysteine.

The protein belongs to the BamD family. Part of the Bam complex.

It is found in the cell outer membrane. Functionally, part of the outer membrane protein assembly complex, which is involved in assembly and insertion of beta-barrel proteins into the outer membrane. Required for efficient transformation of Neisseria gonorrhoeae by species-related DNA. The protein is Outer membrane protein assembly factor BamD of Neisseria gonorrhoeae.